Consider the following 901-residue polypeptide: Alpha-actinin-3 (901 aa).

N-acetylmethionine is present on Met1. The segment at 1–261 (MMMVLQPEGL…IMTYVSCFYH (261 aa)) is actin-binding. 2 consecutive Calponin-homology (CH) domains span residues 45 to 149 (KQQR…LRFA) and 158 to 264 (TSAK…HAFA). Spectrin repeat units follow at residues 288-398 (KLME…WLLS), 408-513 (HLAE…ALER), 523-634 (QLQL…MLQE), and 644-747 (RLRR…EVEN). EF-hand domains are found at residues 760-795 (EQLNEFRASFNHFDRKRNGMMEPDDFRACLISMGYD) and 796-831 (LGEVEFARIMTMVDPNAAGVVTFQAFIDFMTRETAE). The Ca(2+) site is built by Asp773, Asn777, Met779, Asp784, Asp809, and Asn811.

The protein belongs to the alpha-actinin family. Homodimer; antiparallel. Also forms heterodimers with ACTN2. Interacts with MYOZ1.

Functionally, F-actin cross-linking protein which is thought to anchor actin to a variety of intracellular structures. This is a bundling protein. This Bos taurus (Bovine) protein is Alpha-actinin-3 (ACTN3).